Reading from the N-terminus, the 241-residue chain is Proteasome subunit alpha (241 aa).

The protein belongs to the peptidase T1A family. As to quaternary structure, the 20S proteasome core is composed of 14 alpha and 14 beta subunits that assemble into four stacked heptameric rings, resulting in a barrel-shaped structure. The two inner rings, each composed of seven catalytic beta subunits, are sandwiched by two outer rings, each composed of seven alpha subunits. The catalytic chamber with the active sites is on the inside of the barrel. Has a gated structure, the ends of the cylinder being occluded by the N-termini of the alpha-subunits. Is capped at one or both ends by the proteasome regulatory ATPase, PAN.

Its subcellular location is the cytoplasm. With respect to regulation, the formation of the proteasomal ATPase PAN-20S proteasome complex, via the docking of the C-termini of PAN into the intersubunit pockets in the alpha-rings, triggers opening of the gate for substrate entry. Interconversion between the open-gate and close-gate conformations leads to a dynamic regulation of the 20S proteasome proteolysis activity. Its function is as follows. Component of the proteasome core, a large protease complex with broad specificity involved in protein degradation. This chain is Proteasome subunit alpha, found in Saccharolobus islandicus (strain M.16.4 / Kamchatka #3) (Sulfolobus islandicus).